We begin with the raw amino-acid sequence, 254 residues long: Homeobox protein Nkx-6.3 (254 aa).

Disordered regions lie at residues 112 to 140 (QDWRGGNPALSSASNTEGSSRKKHTRPTF) and 191 to 228 (KSAVETPGLPSLSTRAPGDLIPSDNEDDEYSKPLDPDS). Polar residues predominate over residues 120–129 (ALSSASNTEG). A DNA-binding region (homeobox) is located at residues 133-192 (KKHTRPTFTGHQIFALEKTFEQTKYLAGPERARLAFSLGMSESQVKVWFQNRRTKWRKKS).

The protein resides in the nucleus. Putative transcription factor, which may be involved in patterning of central nervous system and pancreas. This is Homeobox protein Nkx-6.3 (nkx6-3) from Xenopus laevis (African clawed frog).